A 390-amino-acid polypeptide reads, in one-letter code: Protein-glutamate methylesterase/protein-glutamine glutaminase 1 (390 aa).

The Response regulatory domain occupies 4-121 (KVLVVDDSGF…SRNPQKVKQL (118 aa)). 4-aspartylphosphate is present on Asp-55. The span at 132–186 (SNRRSSGIGSASAASPAPAAPAPSTLSSRAPAPSAAAPARAVPSRTVAPAAAPAA) shows a compositional bias: low complexity. Positions 132–201 (SNRRSSGIGS…PAHPTTTGTA (70 aa)) are disordered. In terms of domain architecture, CheB-type methylesterase spans 195–387 (PTTTGTAKRK…LDDIGRHLVE (193 aa)). Catalysis depends on residues Ser-214, His-241, and Asp-334.

The protein belongs to the CheB family. Phosphorylated by CheA. Phosphorylation of the N-terminal regulatory domain activates the methylesterase activity.

It localises to the cytoplasm. The enzyme catalyses [protein]-L-glutamate 5-O-methyl ester + H2O = L-glutamyl-[protein] + methanol + H(+). It catalyses the reaction L-glutaminyl-[protein] + H2O = L-glutamyl-[protein] + NH4(+). Its function is as follows. Involved in chemotaxis. Part of a chemotaxis signal transduction system that modulates chemotaxis in response to various stimuli. Catalyzes the demethylation of specific methylglutamate residues introduced into the chemoreceptors (methyl-accepting chemotaxis proteins or MCP) by CheR. Also mediates the irreversible deamidation of specific glutamine residues to glutamic acid. This chain is Protein-glutamate methylesterase/protein-glutamine glutaminase 1, found in Pseudomonas syringae pv. tomato (strain ATCC BAA-871 / DC3000).